Here is a 469-residue protein sequence, read N- to C-terminus: Tetratricopeptide repeat protein 38 (469 aa).

TPR repeat units lie at residues 107–140 (REML…HPTD), 179–212 (SYVK…DQTD), and 251–284 (CHVY…QCFA).

Belongs to the TTC38 family.

This is Tetratricopeptide repeat protein 38 (ttc38) from Xenopus tropicalis (Western clawed frog).